A 563-amino-acid chain; its full sequence is Choline transporter (563 aa).

Residues Met1–Lys25 form a disordered region. Residues Met1 to Ser57 are Extracellular-facing. 2 N-linked (GlcNAc...) asparagine glycosylation sites follow: Asn7 and Asn20. 2 positions are modified to phosphoserine: Ser22 and Ser42. A helical membrane pass occupies residues Phe58–Ser78. Topologically, residues Thr79–Ser87 are cytoplasmic. A helical transmembrane segment spans residues Gly88–Gly108. The Extracellular segment spans residues Thr109–Arg182. Residues Trp183 to Gly203 traverse the membrane as a helical segment. At Lys204–Ser205 the chain is on the cytoplasmic side. The chain crosses the membrane as a helical span at residues Leu206–Ile226. At Thr227–Gly255 the chain is on the extracellular side. N-linked (GlcNAc...) asparagine glycosylation is present at Asn248. A helical membrane pass occupies residues Gly256 to Ala276. Residues Thr277 to Ala293 are Cytoplasmic-facing. A helical membrane pass occupies residues Ile294–Phe314. The Extracellular portion of the chain corresponds to Ser315–Lys342. An N-linked (GlcNAc...) asparagine glycan is attached at Asn341. The helical transmembrane segment at Ser343–Cys363 threads the bilayer. At His364–Asn398 the chain is on the cytoplasmic side. Residues Ala399–Ser417 traverse the membrane as a helical segment. At Ser418–Thr426 the chain is on the extracellular side. A helical membrane pass occupies residues Gly427 to Ala445. Topologically, residues Lys446–Asn465 are cytoplasmic. The helical transmembrane segment at Ile466–Pro486 threads the bilayer. Residues Val487 to Asn491 lie on the Extracellular side of the membrane. Residues Met492–Tyr512 traverse the membrane as a helical segment. The Cytoplasmic segment spans residues Lys513–Lys563.

It belongs to the amino acid-polyamine-organocation (APC) superfamily. Amino acid/choline transporter (ACT) (TC 2.A.3.4) family.

The protein localises to the membrane. The enzyme catalyses choline(out) = choline(in). It catalyses the reaction ethanolamine(in) = ethanolamine(out). Its function is as follows. Sole choline transporter in yeast. Also transports ethanolamine. This is Choline transporter (HNM1) from Saccharomyces cerevisiae (strain ATCC 204508 / S288c) (Baker's yeast).